Reading from the N-terminus, the 500-residue chain is Probable malate:quinone oxidoreductase (500 aa).

This sequence belongs to the MQO family. The cofactor is FAD.

It carries out the reaction (S)-malate + a quinone = a quinol + oxaloacetate. The protein operates within carbohydrate metabolism; tricarboxylic acid cycle; oxaloacetate from (S)-malate (quinone route): step 1/1. In Halalkalibacterium halodurans (strain ATCC BAA-125 / DSM 18197 / FERM 7344 / JCM 9153 / C-125) (Bacillus halodurans), this protein is Probable malate:quinone oxidoreductase.